The chain runs to 157 residues: ATP synthase subunit b (157 aa).

Residues 7–29 traverse the membrane as a helical segment; it reads MFGQLIMFTMFTWFCMKFVWPPI.

This sequence belongs to the ATPase B chain family. As to quaternary structure, F-type ATPases have 2 components, F(1) - the catalytic core - and F(0) - the membrane proton channel. F(1) has five subunits: alpha(3), beta(3), gamma(1), delta(1), epsilon(1). F(0) has three main subunits: a(1), b(2) and c(10-14). The alpha and beta chains form an alternating ring which encloses part of the gamma chain. F(1) is attached to F(0) by a central stalk formed by the gamma and epsilon chains, while a peripheral stalk is formed by the delta and b chains.

Its subcellular location is the cell inner membrane. In terms of biological role, f(1)F(0) ATP synthase produces ATP from ADP in the presence of a proton or sodium gradient. F-type ATPases consist of two structural domains, F(1) containing the extramembraneous catalytic core and F(0) containing the membrane proton channel, linked together by a central stalk and a peripheral stalk. During catalysis, ATP synthesis in the catalytic domain of F(1) is coupled via a rotary mechanism of the central stalk subunits to proton translocation. Component of the F(0) channel, it forms part of the peripheral stalk, linking F(1) to F(0). This Ruthia magnifica subsp. Calyptogena magnifica protein is ATP synthase subunit b.